The sequence spans 106 residues: Cell division protein FtsB (106 aa).

The Cytoplasmic portion of the chain corresponds to 1 to 3 (MGK). The helical transmembrane segment at 4–21 (LTLLLLVLLGWLQYSLWL) threads the bilayer. Residues 22-106 (GKNGIHDYVR…SRPSTPNNTQ (85 aa)) lie on the Periplasmic side of the membrane. Residues 29-70 (YVRVKNDVAMQERNNSKLKARNDQLSAEIDDLTGGQEAIEER) are a coiled coil.

The protein belongs to the FtsB family. As to quaternary structure, part of a complex composed of FtsB, FtsL and FtsQ.

Its subcellular location is the cell inner membrane. Functionally, essential cell division protein. May link together the upstream cell division proteins, which are predominantly cytoplasmic, with the downstream cell division proteins, which are predominantly periplasmic. The protein is Cell division protein FtsB of Photorhabdus laumondii subsp. laumondii (strain DSM 15139 / CIP 105565 / TT01) (Photorhabdus luminescens subsp. laumondii).